Consider the following 711-residue polypeptide: Polyribonucleotide nucleotidyltransferase (711 aa).

The Mg(2+) site is built by D486 and D492. One can recognise a KH domain in the interval 553 to 612 (PRIHTIKINPDKIKDVIGKGGSVIRALTEETGTTIEIEDDGTVKIAATDGEKAKHAIRRI). Positions 622–690 (GRVYTGKVTR…RQGRIRLSIK (69 aa)) constitute an S1 motif domain. The interval 690 to 711 (KEATEQSQPAAAPEAPAAEQGE) is disordered. The span at 694–711 (EQSQPAAAPEAPAAEQGE) shows a compositional bias: low complexity.

This sequence belongs to the polyribonucleotide nucleotidyltransferase family. As to quaternary structure, component of the RNA degradosome, which is a multiprotein complex involved in RNA processing and mRNA degradation. Requires Mg(2+) as cofactor.

It is found in the cytoplasm. It carries out the reaction RNA(n+1) + phosphate = RNA(n) + a ribonucleoside 5'-diphosphate. Functionally, involved in mRNA degradation. Catalyzes the phosphorolysis of single-stranded polyribonucleotides processively in the 3'- to 5'-direction. The chain is Polyribonucleotide nucleotidyltransferase from Shigella dysenteriae serotype 1 (strain Sd197).